The primary structure comprises 301 residues: Phospholipase A1 (301 aa).

Cys4 and Cys87 are disulfide-bonded. Ser137 serves as the catalytic Nucleophile. Asp165 functions as the Charge relay system in the catalytic mechanism. Cystine bridges form between Cys176/Cys181 and Cys219/Cys228. His230 serves as the catalytic Charge relay system. Intrachain disulfides connect Cys245–Cys269, Cys246–Cys294, and Cys262–Cys267.

It belongs to the AB hydrolase superfamily. Lipase family. Expressed by the venom gland.

The protein localises to the secreted. It carries out the reaction a 1,2-diacyl-sn-glycero-3-phosphocholine + H2O = a 2-acyl-sn-glycero-3-phosphocholine + a fatty acid + H(+). Its function is as follows. Catalyzes the hydrolysis of phosphatidylcholine with phospholipase A1 activity. May act as an allergen and induce hemolytic activity. The protein is Phospholipase A1 of Vespa crabro (European hornet).